A 395-amino-acid polypeptide reads, in one-letter code: Succinyl-diaminopimelate desuccinylase (395 aa).

Histidine 74 contacts Zn(2+). Aspartate 76 is a catalytic residue. Aspartate 107 contributes to the Zn(2+) binding site. Glutamate 141 acts as the Proton acceptor in catalysis. The Zn(2+) site is built by glutamate 142, glutamate 170, and histidine 368.

Belongs to the peptidase M20A family. DapE subfamily. Homodimer. It depends on Zn(2+) as a cofactor. Co(2+) serves as cofactor.

The catalysed reaction is N-succinyl-(2S,6S)-2,6-diaminopimelate + H2O = (2S,6S)-2,6-diaminopimelate + succinate. It participates in amino-acid biosynthesis; L-lysine biosynthesis via DAP pathway; LL-2,6-diaminopimelate from (S)-tetrahydrodipicolinate (succinylase route): step 3/3. In terms of biological role, catalyzes the hydrolysis of N-succinyl-L,L-diaminopimelic acid (SDAP), forming succinate and LL-2,6-diaminopimelate (DAP), an intermediate involved in the bacterial biosynthesis of lysine and meso-diaminopimelic acid, an essential component of bacterial cell walls. This Brucella melitensis biotype 2 (strain ATCC 23457) protein is Succinyl-diaminopimelate desuccinylase.